Here is a 133-residue protein sequence, read N- to C-terminus: Small ribosomal subunit protein uS8 (133 aa).

This sequence belongs to the universal ribosomal protein uS8 family. In terms of assembly, part of the 30S ribosomal subunit. Contacts proteins S5 and S12.

In terms of biological role, one of the primary rRNA binding proteins, it binds directly to 16S rRNA central domain where it helps coordinate assembly of the platform of the 30S subunit. This is Small ribosomal subunit protein uS8 from Thermosynechococcus vestitus (strain NIES-2133 / IAM M-273 / BP-1).